Here is a 349-residue protein sequence, read N- to C-terminus: Ribosomal RNA small subunit methyltransferase H 1 (349 aa).

Residues 79-81 (GGH), Asp99, Phe129, Asp148, and Gln155 each bind S-adenosyl-L-methionine.

This sequence belongs to the methyltransferase superfamily. RsmH family.

Its subcellular location is the cytoplasm. The enzyme catalyses cytidine(1402) in 16S rRNA + S-adenosyl-L-methionine = N(4)-methylcytidine(1402) in 16S rRNA + S-adenosyl-L-homocysteine + H(+). In terms of biological role, specifically methylates the N4 position of cytidine in position 1402 (C1402) of 16S rRNA. The chain is Ribosomal RNA small subunit methyltransferase H 1 from Agathobacter rectalis (strain ATCC 33656 / DSM 3377 / JCM 17463 / KCTC 5835 / VPI 0990) (Eubacterium rectale).